A 283-amino-acid chain; its full sequence is Probable endonuclease 4 (283 aa).

9 residues coordinate Zn(2+): His67, His107, Glu144, Asp178, His181, His215, Asp228, His230, and Glu260.

This sequence belongs to the AP endonuclease 2 family. The cofactor is Zn(2+).

The catalysed reaction is Endonucleolytic cleavage to 5'-phosphooligonucleotide end-products.. Its function is as follows. Endonuclease IV plays a role in DNA repair. It cleaves phosphodiester bonds at apurinic or apyrimidinic (AP) sites, generating a 3'-hydroxyl group and a 5'-terminal sugar phosphate. The sequence is that of Probable endonuclease 4 from Geobacter sp. (strain M21).